We begin with the raw amino-acid sequence, 206 residues long: Testis-expressed protein 38 (206 aa).

The chain crosses the membrane as a helical span at residues 15–35 (VSLYFGILGLCSVITGGCIIF).

The protein localises to the membrane. The sequence is that of Testis-expressed protein 38 (TEX38) from Homo sapiens (Human).